Here is a 218-residue protein sequence, read N- to C-terminus: Small ribosomal subunit protein uS3 (218 aa).

The region spanning valine 38–lysine 107 is the KH type-2 domain.

The protein belongs to the universal ribosomal protein uS3 family. Part of the 30S ribosomal subunit. Forms a tight complex with proteins S10 and S14.

Its function is as follows. Binds the lower part of the 30S subunit head. Binds mRNA in the 70S ribosome, positioning it for translation. The sequence is that of Small ribosomal subunit protein uS3 from Exiguobacterium sibiricum (strain DSM 17290 / CCUG 55495 / CIP 109462 / JCM 13490 / 255-15).